We begin with the raw amino-acid sequence, 676 residues long: Lutropin-choriogonadotropic hormone receptor (676 aa).

The first 29 residues, 1 to 29 (MKQPLLALQLLKLLLLLLLPLPPLPRALR), serve as a signal peptide directing secretion. Over 30–340 (EARCCPEPCN…EDIMGYDFLR (311 aa)) the chain is Extracellular. An N-linked (GlcNAc...) asparagine glycan is attached at Asn-103. 5 LRR repeats span residues 126-151 (LPRLKYLSICNTGIRKFPDVTKIFSS), 153-175 (TNFILEICDNLHITTIPGNAFQG), 176-200 (MNNESITLKLYGNGFEEVQSHAFNG), 201-224 (TTVISLVLKENVHLERIHNGAFRG), and 225-248 (ATGPSILDISSTKLQALPSHGLES). Asn-178 and Asn-199 each carry an N-linked (GlcNAc...) asparagine glycan. The residue at position 308 (Tyr-308) is a Sulfotyrosine. Residues 341–362 (VLIWLINILAIMGNMTVLFVLL) traverse the membrane as a helical segment. Residues 363 to 372 (TSRYKLTVPR) are Cytoplasmic-facing. A helical transmembrane segment spans residues 373–393 (FLMCNLSFADFCMGLYLLLIA). The Extracellular portion of the chain corresponds to 394–416 (SVDSQTKGQYYNHAIDWQTGSGC). A disulfide bridge connects residues Cys-416 and Cys-491. The chain crosses the membrane as a helical span at residues 417-439 (NTAGFFTVFASELSVYTLTVITL). Residues 440–459 (ERWHTITYAIHLDQKLRLRH) are Cytoplasmic-facing. Residues 460–482 (AILIMLGGWLFSSLIAMLPLVGV) form a helical membrane-spanning segment. The Extracellular segment spans residues 483–502 (SNYMKVSICFPMDVETTLSQ). A helical transmembrane segment spans residues 503 to 526 (IYILTILILNVVAFIIICACYIKI). Topologically, residues 527–547 (YFAVRNPELMATNKDTKIAKK) are cytoplasmic. Residues 548 to 571 (MAILIFTDFTCMAPISFFAISAAF) form a helical membrane-spanning segment. Residues 572 to 582 (KMPLITVTNSK) lie on the Extracellular side of the membrane. Residues 583–604 (VLLVLFYPINSCANPFLYAIFT) form a helical membrane-spanning segment. The Cytoplasmic portion of the chain corresponds to 605–676 (KTFRRDFFLL…LLDKTCYKEY (72 aa)). S-palmitoyl cysteine attachment occurs at residues Cys-620 and Cys-621.

It belongs to the G-protein coupled receptor 1 family. FSH/LSH/TSH subfamily. Post-translationally, sulfated.

It localises to the cell membrane. Receptor for lutropin-choriogonadotropic hormone. The activity of this receptor is mediated by G proteins which activate adenylate cyclase. In Callithrix jacchus (White-tufted-ear marmoset), this protein is Lutropin-choriogonadotropic hormone receptor (LHCGR).